A 247-amino-acid polypeptide reads, in one-letter code: MKAVILIPARLESSRLERKMLADLEGEPLIVRTWRQAMRSTLAERVVVATDSRDIASVLEERGAEVVMTSPSASCGTERIAEAARNIEGDVFVNLQGDEPLISPDTIDLVLSPFFAADPPDCSTLVFALRPDEREQIEDPHIVKALLDRKGNALYFSRSPVPFMRNNTPSLVFYRHVGMYAFGRDVLQQFAALPVSMLEAAESLEQLRLLENGFSIRCVITTLDQPGVNTAEDLELVRSILRKESRS.

This sequence belongs to the KdsB family.

It localises to the cytoplasm. It catalyses the reaction 3-deoxy-alpha-D-manno-oct-2-ulosonate + CTP = CMP-3-deoxy-beta-D-manno-octulosonate + diphosphate. It participates in nucleotide-sugar biosynthesis; CMP-3-deoxy-D-manno-octulosonate biosynthesis; CMP-3-deoxy-D-manno-octulosonate from 3-deoxy-D-manno-octulosonate and CTP: step 1/1. It functions in the pathway bacterial outer membrane biogenesis; lipopolysaccharide biosynthesis. Activates KDO (a required 8-carbon sugar) for incorporation into bacterial lipopolysaccharide in Gram-negative bacteria. This Chlorobium phaeovibrioides (strain DSM 265 / 1930) (Prosthecochloris vibrioformis (strain DSM 265)) protein is 3-deoxy-manno-octulosonate cytidylyltransferase.